Consider the following 225-residue polypeptide: Perlwapin-like protein (225 aa).

The N-terminal stretch at 1–19 (MNHLWLFIVTVSCIYLVYG) is a signal peptide. Cystine bridges form between C27-C57, C36-C61, C43-C56, and C49-C65. Positions 27 to 68 (CKVKFMGTACPLGRLVCEEDGDCLGVNQVCCYDGCGTTCHNK) constitute a WAP 1; atypical domain. N-linked (GlcNAc...) asparagine glycosylation occurs at N67. Positions 117–169 (IIPSPELLCPVVTVRYAFCRFSTYTPCHTSNDCAVPGMKCCPDVCGKRCKFPI) constitute a WAP 2 domain. Cystine bridges form between C125/C157, C135/C161, C143/C156, and C149/C165. A glycan (N-linked (GlcNAc...) asparagine) is linked at N170. A disordered region spans residues 176-225 (QFQQTPLKPTVPLPQYQQTPLQPTVPSSQPPLQPTVPSPQSYNYKGACST). The span at 188 to 201 (LPQYQQTPLQPTVP) shows a compositional bias: low complexity. Residues 203-212 (SQPPLQPTVP) show a composition bias toward pro residues. The segment covering 213 to 225 (SPQSYNYKGACST) has biased composition (polar residues).

As to expression, component of the acid-soluble organic matrix of calcified layers of the shell (at protein level).

The protein localises to the secreted. This chain is Perlwapin-like protein, found in Lottia gigantea (Giant owl limpet).